We begin with the raw amino-acid sequence, 551 residues long: Cation/acetate symporter ActP (551 aa).

Helical transmembrane passes span 5–25 (HWSA…ALTG), 34–54 (IQAI…TYWA), 77–97 (GLAI…SALV), 104–124 (GLIY…LIAE), 150–170 (LSAC…MVGA), 184–204 (VAVV…GMLA), 207–227 (WVQI…AIMV), 263–283 (ISAL…PHIL), 304–324 (GFIG…ILLV), 356–376 (FFLG…VAGL), 406–426 (VSKI…ILFE), 430–450 (IAFM…PIII), 469–489 (LGLS…VTIL), and 498–518 (YEYP…FFSI).

It belongs to the sodium:solute symporter (SSF) (TC 2.A.21) family.

The protein resides in the cell inner membrane. In terms of biological role, transports acetate. The protein is Cation/acetate symporter ActP of Yersinia pestis bv. Antiqua (strain Antiqua).